The primary structure comprises 506 residues: Maturase K (506 aa).

The protein belongs to the intron maturase 2 family. MatK subfamily.

It localises to the plastid. The protein localises to the chloroplast. In terms of biological role, usually encoded in the trnK tRNA gene intron. Probably assists in splicing its own and other chloroplast group II introns. The chain is Maturase K from Arctostaphylos uva-ursi (Bearberry).